Consider the following 406-residue polypeptide: Cholinephosphotransferase 1 (406 aa).

At Ala-2 the chain carries N-acetylalanine. At 2–62 (AAGAGARPAP…LLQWIPLWMA (61 aa)) the chain is on the cytoplasmic side. Residues 63-83 (PNSITLLGLAINMLTTLVLIS) traverse the membrane as a helical segment. Asn-64 contributes to the CDP-choline binding site. Residues 84–93 (YCPTVTEEAP) are Lumenal-facing. Residues 94-118 (YWTYLLCALGLFIYQSLDAIDGKQA) traverse the membrane as a helical segment. Asp-111 and Asp-114 together coordinate Mg(2+). A CDP-choline-binding site is contributed by Arg-119. The Cytoplasmic segment spans residues 119–125 (RRTNSCS). The helical transmembrane segment at 126–150 (PLGELFDHGCDSLSTVFMAVGASIA) threads the bilayer. Asp-132 is a binding site for Mg(2+). Catalysis depends on His-133, which acts as the Proton acceptor. A Mg(2+)-binding site is contributed by Asp-136. Topologically, residues 151–160 (VRLGTHPDWL) are lumenal. Residues 161-179 (FFCSFIGMFMFYCAHWQTY) form a helical membrane-spanning segment. Over 180–190 (VSGVLRFGKVD) the chain is Cytoplasmic. Residues 191–207 (VTEIQIALVIVFVLSTF) form a helical membrane-spanning segment. Residues 208–222 (GGATMWDYTIPILEI) lie on the Lumenal side of the membrane. The chain crosses the membrane as a helical span at residues 223–248 (KLKILPVLGVVGGAIFSCSNYFHVIL). Over 249 to 265 (HGGVGKNGSTIAGTSVL) the chain is Cytoplasmic. A helical membrane pass occupies residues 266–281 (SPGLHIGIIIILAIMI). The Lumenal portion of the chain corresponds to 282-293 (YKKSATNLFEKH). Residues 294–316 (PCLYTLMFGCVFAKVSQKLVIAH) form a helical membrane-spanning segment. Residues 317-329 (MTKSELYLQDTVF) are Cytoplasmic-facing. A helical membrane pass occupies residues 330 to 339 (IGPGLLFLDQ). Over 340-346 (YFNNFVD) the chain is Lumenal. A helical membrane pass occupies residues 347–376 (EYIVLWIAMVISSLDMMRYFSALCLQISRH). Over 377–406 (LHLSIFKTSCHQAPEQVQVLPPKSHQNNMD) the chain is Cytoplasmic.

The protein belongs to the CDP-alcohol phosphatidyltransferase class-I family. The cofactor is Mg(2+). Requires Mn(2+) as cofactor.

The protein localises to the golgi apparatus membrane. The catalysed reaction is CDP-choline + a 1,2-diacyl-sn-glycerol = a 1,2-diacyl-sn-glycero-3-phosphocholine + CMP + H(+). It catalyses the reaction 1-octadecanoyl-2-(5Z,8Z,11Z,14Z-eicosatetraenoyl)-sn-glycerol + CDP-choline = 1-octadecanoyl-2-(5Z,8Z,11Z,14Z-eicosatetraenoyl)-sn-glycero-3-phosphocholine + CMP + H(+). The enzyme catalyses 1-hexadecanoyl-2-(9Z-octadecenoyl)-sn-glycerol + CDP-choline = 1-hexadecanoyl-2-(9Z-octadecenoyl)-sn-glycero-3-phosphocholine + CMP + H(+). It carries out the reaction 1-hexadecanoyl-2-(4Z,7Z,10Z,13Z,16Z,19Z-docosahexaenoyl)-sn-glycerol + CDP-choline = 1-hexadecanoyl-2-(4Z,7Z,10Z,13Z,16Z,19Z-docosahexaenoyl)-sn-glycero-3-phosphocholine + CMP + H(+). The catalysed reaction is 1,2-dioctanoyl-sn-glycerol + CDP-choline = 1,2-dioctanoyl-sn-glycero-3-phosphocholine + CMP + H(+). The protein operates within phospholipid metabolism; phosphatidylcholine biosynthesis; phosphatidylcholine from phosphocholine: step 2/2. Catalyzes the final step of de novo phosphatidylcholine (PC) synthesis, i.e. the transfer of choline phosphate from CDP-choline to the free hydroxyl of a diacylglycerol (DAG), producing a PC. It thereby plays a central role in the formation and maintenance of vesicular membranes. The chain is Cholinephosphotransferase 1 (CHPT1) from Bos taurus (Bovine).